A 514-amino-acid polypeptide reads, in one-letter code: Thymus-specific serine protease (514 aa).

Residues 1-24 (MAVWLAQWLGPLLLVSLWGLLAPA) form the signal peptide. Residues Asn-70 and Asn-172 are each glycosylated (N-linked (GlcNAc...) asparagine). Ser-185 functions as the Charge relay system in the catalytic mechanism. Asn-321 carries N-linked (GlcNAc...) asparagine glycosylation. Active-site charge relay system residues include Asp-447 and His-472.

The protein belongs to the peptidase S28 family. In terms of tissue distribution, expressed predominantly in cortical thymic epithelial cells.

The protein localises to the cytoplasmic vesicle. In terms of biological role, protease that may play a role in T-cell development. The sequence is that of Thymus-specific serine protease (PRSS16) from Homo sapiens (Human).